We begin with the raw amino-acid sequence, 580 residues long: Acyl--CoA ligase GME11374 (580 aa).

It belongs to the ATP-dependent AMP-binding enzyme family.

Its pathway is secondary metabolite biosynthesis. Functionally, acyl--CoA ligase; part of the gene cluster that mediates the biosynthesis of dibenzodioxocinones such as pestalotiollide B, a novel class of inhibitors against cholesterol ester transfer protein (CEPT). The biosynthesis initiates from condensation of acetate and malonate units catalyzed by the non-reducing PKS pks8/GME11356. Pks8/GME11356 lacks a thioesterase (TE) domain, which is important to the cyclizing of the third ring of atrochrysone carboxylic acid, and the esterase GME11355 might play the role of TE and catalyzes the cyclization reaction of the C ring. The lactamase-like protein GME11357 (or other beta-lactamases in Pestalotiopsis microspora) probably hydrolyzes the thioester bond between the ACP of pks8/GME11356 and the intermediate to release atrochrysone carboxylic acid, which is spontaneously dehydrates to form endocrocin anthrone. Endocrocin anthrone is further converted to emodin via the endocrocin intermediate. Emodin is then oxidized by several enzymes such as the Baeyer-Villiger oxidase GME11358, the oxidoreductase GME11367, the short chain dehydrogenase/reductase GME11373, as well as by other oxidoreductases from the cluster, to modify the A and C rings and open the B ring, and finally yield monodictyphenone. The prenyltransferase GME11375 may catalyze the addition reaction between the C5 side chains and the carbon bone of dibenzodioxocinones. The remaining biochemical reactions to the final product dibenzodioxocinones should be methylation catalyzed by methyltransferase GME11366 and reduction and lactonization reaction catalyzed by a series of oxidordeuctases. The polypeptide is Acyl--CoA ligase GME11374 (Pestalotiopsis microspora).